A 279-amino-acid polypeptide reads, in one-letter code: uncharacterized protein (279 aa).

Residues 1-29 show a composition bias toward low complexity; it reads MSSRYTSSYTPSSRYGSGWDYSSSYSSSR. Disordered regions lie at residues 1-111 and 137-233; these read MSSR…APRE and LTLA…AEAL. A compositionally biased stretch (basic and acidic residues) spans 30–44; it reads TSRDRDTGSYRDRDY. Over residues 45–59 the composition is skewed to low complexity; that stretch reads SSTSYTSTRPRYSTY. Positions 142–153 are enriched in acidic residues; it reads EPEESEEEEDDE. Low complexity predominate over residues 170-186; that stretch reads ESSPVSSPVKEVSSAAS. Polar residues predominate over residues 189 to 205; the sequence is ANDNGNETENRTPSPTV. The segment covering 221–233 has biased composition (basic and acidic residues); it reads SDVKKEGGDAEAL.

This is an uncharacterized protein from Caenorhabditis elegans.